We begin with the raw amino-acid sequence, 452 residues long: tRNA modification GTPase MnmE (452 aa).

(6S)-5-formyl-5,6,7,8-tetrahydrofolate-binding residues include arginine 21, glutamate 78, and lysine 118. A TrmE-type G domain is found at 214-375 (GMKVVIAGRP…LREHLKKSMG (162 aa)). Asparagine 224 contributes to the K(+) binding site. Residues 224-229 (NAGKSS), 243-249 (TNIAGTT), and 268-271 (DTAG) contribute to the GTP site. Mg(2+) is bound at residue serine 228. K(+)-binding residues include threonine 243, isoleucine 245, and threonine 248. Threonine 249 lines the Mg(2+) pocket. Lysine 452 serves as a coordination point for (6S)-5-formyl-5,6,7,8-tetrahydrofolate.

This sequence belongs to the TRAFAC class TrmE-Era-EngA-EngB-Septin-like GTPase superfamily. TrmE GTPase family. In terms of assembly, homodimer. Heterotetramer of two MnmE and two MnmG subunits. K(+) serves as cofactor.

The protein resides in the cytoplasm. Functionally, exhibits a very high intrinsic GTPase hydrolysis rate. Involved in the addition of a carboxymethylaminomethyl (cmnm) group at the wobble position (U34) of certain tRNAs, forming tRNA-cmnm(5)s(2)U34. In Actinobacillus pleuropneumoniae serotype 3 (strain JL03), this protein is tRNA modification GTPase MnmE.